The sequence spans 278 residues: Undecaprenyl-diphosphatase (278 aa).

The next 8 membrane-spanning stretches (helical) occupy residues 2–22 (ALVE…TEWL), 44–64 (AFME…VVLL), 85–105 (IEMW…GLLW), 113–133 (FYNY…FIVI), 150–170 (ITYT…IFPG), 189–209 (TVAA…ASAL), 223–243 (LMIL…SIKF), and 253–273 (FKIF…YFSA).

Belongs to the UppP family.

It is found in the cell membrane. The enzyme catalyses di-trans,octa-cis-undecaprenyl diphosphate + H2O = di-trans,octa-cis-undecaprenyl phosphate + phosphate + H(+). Functionally, catalyzes the dephosphorylation of undecaprenyl diphosphate (UPP). Confers resistance to bacitracin. The chain is Undecaprenyl-diphosphatase from Desulfitobacterium hafniense (strain DSM 10664 / DCB-2).